The primary structure comprises 462 residues: MTVIGIDDTDSRNRGMCTTYLATRIATAIEHAGGTVERRLLIRLNPAVEHKTRGNAAIALHTDIDPTDAVEISTQFIDSLAISDDPNTSPGVVITDTCTPHSVADSVIDFCWDAIREFHTIADTVDLIEQVGYHHQGWDGGRGRIGALAAVGAWAALTEWTIEHIAYRQFNRCGTDRDVDEKSVFEAAKRQYPAVWDTVDREEDDAVCVPNAPGPILYGIRGDDVAAVKTVAAEIDSEPVERSSTFITNQGTDIHLRPGTIGSLRDNRAYRVTGTVITDPETRPGGHVFVTLGKRETTEEDHIEETSSKESAVLTDTHHLRTKSSNPDITDQNVSSTITCVAFEPTKRFRQWVRKLRVGDIITVCGEVSNGTLKLEKFAIRSLTRTTKTAPICPGCNRTMKSAGRNQGYRCRDCGTSSSTQSEKSLDRVLSLKWYEVPPCARRHIAQPLIRGDFDAPIMPER.

The protein belongs to the TiaS family.

Its subcellular location is the cytoplasm. It catalyses the reaction cytidine(34) in tRNA(Ile2) + agmatine + ATP + H2O = 2-agmatinylcytidine(34) in tRNA(Ile2) + AMP + 2 phosphate + 2 H(+). In terms of biological role, ATP-dependent agmatine transferase that catalyzes the formation of 2-agmatinylcytidine (agm2C) at the wobble position (C34) of tRNA(Ile2), converting the codon specificity from AUG to AUA. In Haloquadratum walsbyi (strain DSM 16790 / HBSQ001), this protein is tRNA(Ile2) 2-agmatinylcytidine synthetase TiaS.